The primary structure comprises 155 residues: Fibroblast growth factor 1 (155 aa).

At A2 the chain carries N-acetylalanine. The propeptide occupies 2–15 (AEGEITTFSALTER). N33 is a binding site for heparin. The heparin-binding stretch occupies residues 127 to 143 (KKNGSCKRGPRTHYGQK).

Belongs to the heparin-binding growth factors family. As to quaternary structure, monomer. Homodimer. Interacts with FGFR1, FGFR2, FGFR3 and FGFR4. Affinity between fibroblast growth factors (FGFs) and their receptors is increased by heparan sulfate glycosaminoglycans that function as coreceptors. Found in a complex with FGFBP1, FGF1 and FGF2. Interacts with FGFBP1. Part of a Cu(2+)-dependent multiprotein aggregate containing FGF1, S100A13 and SYT1. Interacts with SYT1. Interacts with S100A13. Interacts with LRRC59. Interacts with CSNKA, CSNKB and FIBP. While binding with LRRC59, CSNKA and FIBP seem mutually exclusive, CSNKB and FIBP may cooperatively interact with FGF1. Forms a ternary complex with FGFR1 and ITGAV:ITGB3 and induces the recruitment of PTPN11 to the complex. In terms of processing, in the nucleus, phosphorylated by PKC/PRKCD.

It is found in the secreted. The protein resides in the cytoplasm. The protein localises to the cell cortex. Its subcellular location is the cytosol. It localises to the nucleus. Its function is as follows. Plays an important role in the regulation of cell survival, cell division, angiogenesis, cell differentiation and cell migration. Functions as a potent mitogen in vitro. Acts as a ligand for FGFR1 and integrins. Binds to FGFR1 in the presence of heparin leading to FGFR1 dimerization and activation via sequential autophosphorylation on tyrosine residues which act as docking sites for interacting proteins, leading to the activation of several signaling cascades. Binds to integrin ITGAV:ITGB3. Its binding to integrin, subsequent ternary complex formation with integrin and FGFR1, and the recruitment of PTPN11 to the complex are essential for FGF1 signaling. Induces the phosphorylation and activation of FGFR1, FRS2, MAPK3/ERK1, MAPK1/ERK2 and AKT1. Can induce angiogenesis. The polypeptide is Fibroblast growth factor 1 (FGF1) (Mesocricetus auratus (Golden hamster)).